The primary structure comprises 105 residues: UPF0145 protein Aflv_1588 (105 aa).

Belongs to the UPF0145 family.

The polypeptide is UPF0145 protein Aflv_1588 (Anoxybacillus flavithermus (strain DSM 21510 / WK1)).